Consider the following 340-residue polypeptide: MAVNIYYDKDCDLSLIQSKKVAIVGFGSQGHAHAENLRDSGVKVVIGLAKGGKSWAKAEAKGFDVKIVSEATKDADVVMILTPDELQSEIYKKEIEPNLKDGAAIAFGHGFNVHFGQIKAPKNIDVIMIAPKAPGHTVRSEFVRGGGIPDLIAVEQDASGQAKQIALSYASAIGGGRTGIIETTFKDETETDLFGEQAVLCGGLCALVNAGFETLVEAGYEPEMAYFECLHELKLIVDLMYQGGMADMRYSISNTAEYGDYVSGGRVVGEESKRAMKEVLKEIQNGKFAKDFILERKAGYVRMNAERSIAERSLLNQTGKKLRAMMPWISAGKLVDQNKN.

Residues 3–183 enclose the KARI N-terminal Rossmann domain; the sequence is VNIYYDKDCD…GGGRTGIIET (181 aa). Residues 26 to 29, Ser-54, and 84 to 87 each bind NADP(+); these read FGSQ and DELQ. His-109 is a catalytic residue. NADP(+) is bound at residue Gly-135. A KARI C-terminal knotted domain is found at 184 to 329; sequence TFKDETETDL…KKLRAMMPWI (146 aa). 4 residues coordinate Mg(2+): Asp-192, Glu-196, Glu-228, and Glu-232. Residue Ser-253 participates in substrate binding.

This sequence belongs to the ketol-acid reductoisomerase family. Requires Mg(2+) as cofactor.

The catalysed reaction is (2R)-2,3-dihydroxy-3-methylbutanoate + NADP(+) = (2S)-2-acetolactate + NADPH + H(+). It carries out the reaction (2R,3R)-2,3-dihydroxy-3-methylpentanoate + NADP(+) = (S)-2-ethyl-2-hydroxy-3-oxobutanoate + NADPH + H(+). It participates in amino-acid biosynthesis; L-isoleucine biosynthesis; L-isoleucine from 2-oxobutanoate: step 2/4. It functions in the pathway amino-acid biosynthesis; L-valine biosynthesis; L-valine from pyruvate: step 2/4. Involved in the biosynthesis of branched-chain amino acids (BCAA). Catalyzes an alkyl-migration followed by a ketol-acid reduction of (S)-2-acetolactate (S2AL) to yield (R)-2,3-dihydroxy-isovalerate. In the isomerase reaction, S2AL is rearranged via a Mg-dependent methyl migration to produce 3-hydroxy-3-methyl-2-ketobutyrate (HMKB). In the reductase reaction, this 2-ketoacid undergoes a metal-dependent reduction by NADPH to yield (R)-2,3-dihydroxy-isovalerate. In Campylobacter curvus (strain 525.92), this protein is Ketol-acid reductoisomerase (NADP(+)).